The primary structure comprises 115 residues: Large ribosomal subunit protein bL20 (115 aa).

Belongs to the bacterial ribosomal protein bL20 family.

Binds directly to 23S ribosomal RNA and is necessary for the in vitro assembly process of the 50S ribosomal subunit. It is not involved in the protein synthesizing functions of that subunit. In Synechococcus sp. (strain CC9311), this protein is Large ribosomal subunit protein bL20.